A 690-amino-acid chain; its full sequence is Elongation factor G (690 aa).

The region spanning 8-283 (EDYRNFGIMA…AVVDFLPSPL (276 aa)) is the tr-type G domain. Residues 17–24 (AHIDAGKT), 81–85 (DTPGH), and 135–138 (NKMD) contribute to the GTP site.

It belongs to the TRAFAC class translation factor GTPase superfamily. Classic translation factor GTPase family. EF-G/EF-2 subfamily.

It is found in the cytoplasm. Catalyzes the GTP-dependent ribosomal translocation step during translation elongation. During this step, the ribosome changes from the pre-translocational (PRE) to the post-translocational (POST) state as the newly formed A-site-bound peptidyl-tRNA and P-site-bound deacylated tRNA move to the P and E sites, respectively. Catalyzes the coordinated movement of the two tRNA molecules, the mRNA and conformational changes in the ribosome. This chain is Elongation factor G, found in Nitrobacter hamburgensis (strain DSM 10229 / NCIMB 13809 / X14).